We begin with the raw amino-acid sequence, 311 residues long: Methionyl-tRNA formyltransferase (311 aa).

Residue 112–115 participates in (6S)-5,6,7,8-tetrahydrofolate binding; sequence SLLP.

The protein belongs to the Fmt family.

The enzyme catalyses L-methionyl-tRNA(fMet) + (6R)-10-formyltetrahydrofolate = N-formyl-L-methionyl-tRNA(fMet) + (6S)-5,6,7,8-tetrahydrofolate + H(+). Attaches a formyl group to the free amino group of methionyl-tRNA(fMet). The formyl group appears to play a dual role in the initiator identity of N-formylmethionyl-tRNA by promoting its recognition by IF2 and preventing the misappropriation of this tRNA by the elongation apparatus. This chain is Methionyl-tRNA formyltransferase, found in Sinorhizobium medicae (strain WSM419) (Ensifer medicae).